Here is a 456-residue protein sequence, read N- to C-terminus: Shufflon protein D' (456 aa).

Positions 1 to 361 (MKKYDRGWAS…TGAILSCQSG (361 aa)) are constant region. Positions 362–456 (TWRKSNSGST…KCSYVVACQN (95 aa)) are variable region.

The sequence is that of Shufflon protein D' from Escherichia coli.